We begin with the raw amino-acid sequence, 302 residues long: ICOS ligand (302 aa).

An N-terminal signal peptide occupies residues methionine 1–alanine 18. The Ig-like V-type domain occupies aspartate 19–glutamate 129. The Extracellular portion of the chain corresponds to aspartate 19 to threonine 256. Cysteines 37 and 113 form a disulfide. Asparagine 70, asparagine 137, asparagine 173, asparagine 186, and asparagine 225 each carry an N-linked (GlcNAc...) asparagine glycan. Residues proline 141 to threonine 227 form the Ig-like C2-type domain. Cysteine 158 and cysteine 216 form a disulfide bridge. The chain crosses the membrane as a helical span at residues tryptophan 257–cysteine 277. The Cytoplasmic segment spans residues arginine 278–valine 302.

The protein belongs to the immunoglobulin superfamily. BTN/MOG family. In terms of assembly, interacts with CTLA4 (in vitro). Expressed on peripheral blood B-cells and monocytes, as well as on monocyte-derived dendritic cells (at protein level). In terms of tissue distribution, widely expressed (brain, heart, kidney, liver, lung, pancreas, placenta, skeletal muscle, bone marrow, colon, ovary, prostate, testis, lymph nodes, leukocytes, spleen, thymus and tonsil). As to expression, detected only in lymph nodes, leukocytes and spleen. Expressed on activated monocytes and dendritic cells.

It localises to the cell membrane. In terms of biological role, ligand for the T-cell-specific cell surface receptor ICOS. Acts as a costimulatory signal for T-cell proliferation and cytokine secretion. Also induces B-cell proliferation and differentiation into plasma cells. Could play an important role in mediating local tissue responses to inflammatory conditions, as well as in modulating the secondary immune response by co-stimulating memory T-cell function. In endothelial cells, required for proper neutrophil transmigration in response to chemoattractants, such as CXCL8/IL8 or N-formyl-methionyl peptides (fMLP). This Homo sapiens (Human) protein is ICOS ligand (ICOSLG).